Here is a 104-residue protein sequence, read N- to C-terminus: Flagellar hook-basal body complex protein FliE (104 aa).

Belongs to the FliE family.

Its subcellular location is the bacterial flagellum basal body. In Escherichia coli (strain 55989 / EAEC), this protein is Flagellar hook-basal body complex protein FliE.